A 201-amino-acid chain; its full sequence is Adenylyl-sulfate kinase (201 aa).

Residue 35-42 (GLSGSGKS) participates in ATP binding. The active-site Phosphoserine intermediate is the serine 109.

It belongs to the APS kinase family.

It carries out the reaction adenosine 5'-phosphosulfate + ATP = 3'-phosphoadenylyl sulfate + ADP + H(+). It participates in sulfur metabolism; hydrogen sulfide biosynthesis; sulfite from sulfate: step 2/3. Functionally, catalyzes the synthesis of activated sulfate. The protein is Adenylyl-sulfate kinase of Salmonella gallinarum (strain 287/91 / NCTC 13346).